The chain runs to 235 residues: Phosphoribosylaminoimidazole-succinocarboxamide synthase (235 aa).

This sequence belongs to the SAICAR synthetase family.

It carries out the reaction 5-amino-1-(5-phospho-D-ribosyl)imidazole-4-carboxylate + L-aspartate + ATP = (2S)-2-[5-amino-1-(5-phospho-beta-D-ribosyl)imidazole-4-carboxamido]succinate + ADP + phosphate + 2 H(+). It functions in the pathway purine metabolism; IMP biosynthesis via de novo pathway; 5-amino-1-(5-phospho-D-ribosyl)imidazole-4-carboxamide from 5-amino-1-(5-phospho-D-ribosyl)imidazole-4-carboxylate: step 1/2. This Streptococcus pneumoniae (strain ATCC 700669 / Spain 23F-1) protein is Phosphoribosylaminoimidazole-succinocarboxamide synthase.